The following is a 218-amino-acid chain: Elongation factor Ts (218 aa).

Residues 82–85 (TDFV) are involved in Mg(2+) ion dislocation from EF-Tu.

The protein belongs to the EF-Ts family.

It localises to the cytoplasm. Its function is as follows. Associates with the EF-Tu.GDP complex and induces the exchange of GDP to GTP. It remains bound to the aminoacyl-tRNA.EF-Tu.GTP complex up to the GTP hydrolysis stage on the ribosome. The sequence is that of Elongation factor Ts from Prochlorococcus marinus (strain NATL2A).